A 150-amino-acid chain; its full sequence is Large ribosomal subunit protein bL9 (150 aa).

The protein belongs to the bacterial ribosomal protein bL9 family.

Functionally, binds to the 23S rRNA. This Streptococcus pyogenes serotype M18 (strain MGAS8232) protein is Large ribosomal subunit protein bL9.